The sequence spans 264 residues: Meiotically up-regulated gene 162 protein (264 aa).

The next 7 helical transmembrane spans lie at isoleucine 18 to lysine 38, leucine 54 to alanine 74, valine 84 to phenylalanine 104, isoleucine 140 to leucine 160, histidine 174 to isoleucine 194, phenylalanine 199 to threonine 219, and leucine 223 to tyrosine 243.

Its subcellular location is the endoplasmic reticulum membrane. In terms of biological role, has a role in meiosis. This is Meiotically up-regulated gene 162 protein (mug162) from Schizosaccharomyces pombe (strain 972 / ATCC 24843) (Fission yeast).